A 166-amino-acid chain; its full sequence is UBA-like domain-containing protein 2-A (166 aa).

The tract at residues 120–166 (QQPVWLPPASPTTHLHHHHHHPQPVWPPNSQPTGGPQKAMAAMDGQR) is disordered.

This sequence belongs to the UBALD family.

In Xenopus laevis (African clawed frog), this protein is UBA-like domain-containing protein 2-A (ubald2-a).